Consider the following 203-residue polypeptide: Recombination protein RecR (203 aa).

Residues 57–72 (CQRCRTLAETPLCSIC) form a C4-type zinc finger. Residues 80–175 (GLLCVVESPA…RLSRLAYGVP (96 aa)) form the Toprim domain.

Belongs to the RecR family.

Functionally, may play a role in DNA repair. It seems to be involved in an RecBC-independent recombinational process of DNA repair. It may act with RecF and RecO. This chain is Recombination protein RecR, found in Chromohalobacter salexigens (strain ATCC BAA-138 / DSM 3043 / CIP 106854 / NCIMB 13768 / 1H11).